We begin with the raw amino-acid sequence, 164 residues long: MEARTTDLSDLYPEGEALPMVFKSFGGRARFAGRVRTLRVFEDNALVRKVLEEEGAGQVLFVDGGGSLRTALLGGNLARLAWEKGWAGVVVHGAVRDTEELREVPIGLLALAATPKKSAKEGKGEVDVPLKVLGVEVLPGSFLLADEDGLLLLPEPPSGVRSGG.

Residues 74–77 (GGNL) and arginine 96 contribute to the substrate site. Aspartate 97 lines the a divalent metal cation pocket.

The protein belongs to the class II aldolase/RraA-like family. As to quaternary structure, homotrimer. Ni(2+) is required as a cofactor. Requires Co(2+) as cofactor. Zn(2+) serves as cofactor.

It carries out the reaction 4-hydroxy-4-methyl-2-oxoglutarate = 2 pyruvate. It catalyses the reaction oxaloacetate + H(+) = pyruvate + CO2. With respect to regulation, competitively inhibited by oxalate, a pyruvate enolate analog. Its function is as follows. Catalyzes the aldol cleavage of 4-hydroxy-4-methyl-2-oxoglutarate (HMG) into 2 molecules of pyruvate. Also contains a secondary oxaloacetate (OAA) decarboxylase activity due to the common pyruvate enolate transition state formed following C-C bond cleavage in the retro-aldol and decarboxylation reactions. In Thermus thermophilus (strain ATCC 27634 / DSM 579 / HB8), this protein is 4-hydroxy-4-methyl-2-oxoglutarate aldolase.